We begin with the raw amino-acid sequence, 123 residues long: UPF0102 protein APP7_1414 (123 aa).

It belongs to the UPF0102 family.

This chain is UPF0102 protein APP7_1414, found in Actinobacillus pleuropneumoniae serotype 7 (strain AP76).